The chain runs to 260 residues: Capsid protein (260 aa).

Positions 3–20 match the Bipartite nuclear localization signal motif; it reads KRPGDIIISTPVSKVRRR. The Nuclear localization signal signature appears at 41–55; sequence KRRSWTYRPMYRKPR. The segment at 69–86 is a zinc-finger region; sequence CEGPCKVQSYEQRDDIKH. Residues 102–123 carry the Nuclear export signal motif; the sequence is ITHRVGKRFCVKSIYFLGKVWM. The short motif at 202 to 251 is the Bipartite nuclear localization signal element; it reads KRFFKINSHVTLFIFIQEAAKYENHTENALLLYMACTHASNPVYATMKIR.

It belongs to the geminiviridae capsid protein family. Homomultimer. Binds to single-stranded and double-stranded viral DNA. Interacts (via nuclear localization signals) with host importin alpha-1a.

It is found in the virion. The protein resides in the host nucleus. Its function is as follows. Encapsidates the viral genome into characteristic twinned ('geminate') particles. Binds the genomic viral ssDNA and shuttles it into and out of the cell nucleus. Plays a role in protection of the genome from degradation, virus acquisition and transmission by insect vectors, infectivity, and systemic movement. The CP of monopartite geminiviruses is absolutely essential for virus movement. The sequence is that of Capsid protein from Cynanchum acutum (Little mallow).